The sequence spans 541 residues: Imidazole glycerol phosphate synthase hisHF (541 aa).

The Glutamine amidotransferase type-1 domain occupies 2–214 (IVSIVDYGSG…LTGNYEQPIS (213 aa)). Active-site for GATase activity residues include cysteine 80, histidine 189, and glutamate 191. Residues 228–541 (LTKRIIACLD…LAIHDVLVRT (314 aa)) are cyclase. Catalysis depends on residues aspartate 237 and aspartate 396.

The protein in the C-terminal section; belongs to the HisA/HisF family.

It carries out the reaction 5-[(5-phospho-1-deoxy-D-ribulos-1-ylimino)methylamino]-1-(5-phospho-beta-D-ribosyl)imidazole-4-carboxamide + L-glutamine = D-erythro-1-(imidazol-4-yl)glycerol 3-phosphate + 5-amino-1-(5-phospho-beta-D-ribosyl)imidazole-4-carboxamide + L-glutamate + H(+). The enzyme catalyses L-glutamine + H2O = L-glutamate + NH4(+). The protein operates within amino-acid biosynthesis; L-histidine biosynthesis; L-histidine from 5-phospho-alpha-D-ribose 1-diphosphate: step 5/9. Its function is as follows. IGPS catalyzes the conversion of PRFAR and glutamine to IGP, AICAR and glutamate. The glutaminase domain produces the ammonia necessary for the cyclase domain to produce IGP and AICAR from PRFAR. The ammonia is channeled to the active site of the cyclase domain. The polypeptide is Imidazole glycerol phosphate synthase hisHF (his4) (Schizosaccharomyces pombe (strain 972 / ATCC 24843) (Fission yeast)).